A 474-amino-acid polypeptide reads, in one-letter code: tRNA-2-methylthio-N(6)-dimethylallyladenosine synthase (474 aa).

The MTTase N-terminal domain maps to 3-120; it reads KKLLIKTWGC…LPQMIKDSQS (118 aa). Residues Cys12, Cys49, Cys83, Cys157, Cys161, and Cys164 each coordinate [4Fe-4S] cluster. One can recognise a Radical SAM core domain in the interval 143–375; it reads RADGVTAFVS…QQQINTQAMR (233 aa). The TRAM domain occupies 378 to 441; sequence RQMLNTEQRI…TNSLRGELVR (64 aa).

Belongs to the methylthiotransferase family. MiaB subfamily. Monomer. It depends on [4Fe-4S] cluster as a cofactor.

It is found in the cytoplasm. It carries out the reaction N(6)-dimethylallyladenosine(37) in tRNA + (sulfur carrier)-SH + AH2 + 2 S-adenosyl-L-methionine = 2-methylsulfanyl-N(6)-dimethylallyladenosine(37) in tRNA + (sulfur carrier)-H + 5'-deoxyadenosine + L-methionine + A + S-adenosyl-L-homocysteine + 2 H(+). Functionally, catalyzes the methylthiolation of N6-(dimethylallyl)adenosine (i(6)A), leading to the formation of 2-methylthio-N6-(dimethylallyl)adenosine (ms(2)i(6)A) at position 37 in tRNAs that read codons beginning with uridine. This is tRNA-2-methylthio-N(6)-dimethylallyladenosine synthase from Photobacterium profundum (strain SS9).